The chain runs to 419 residues: Peroxisomal membrane protein PMP47B (419 aa).

Solcar repeat units lie at residues 6-120, 142-230, and 239-369; these read YDDL…TGKT, LSVW…LKSF, and VTPV…LLIL. The helical transmembrane segment at 12–32 threads the bilayer; sequence AFAGAGGGLLSMTLTYPLVTL. Basic and acidic residues predominate over residues 44–53; it reads KNEEEEKENS. The segment at 44–69 is disordered; sequence KNEEEEKENSNEDGSLSPKSSNTSNI. Over residues 56–69 the composition is skewed to polar residues; the sequence is DGSLSPKSSNTSNI. A run of 3 helical transmembrane segments spans residues 98–118, 204–224, and 245–265; these read SALF…ELTG, FTGI…YTIF, and LLLG…YITL. Positions 274-305 are disordered; sequence MTENNEDSEKERTDSVQSLPEDGSDEDNSKEN. The next 2 membrane-spanning stretches (helical) occupy residues 310–330 and 349–369; these read TINK…IIGY and LLQS…LLIL.

Belongs to the mitochondrial carrier (TC 2.A.29) family.

It localises to the peroxisome membrane. Its function is as follows. May have transport activity. This Candida boidinii (Yeast) protein is Peroxisomal membrane protein PMP47B (PMP47B).